A 213-amino-acid polypeptide reads, in one-letter code: Isopentenyl-diphosphate Delta-isomerase (213 aa).

Residues 1-10 (MRDSMSEADR) are compositionally biased toward basic and acidic residues. The tract at residues 1–34 (MRDSMSEADRSSPGSGKTDREDETAENATQDVIA) is disordered. The Mn(2+) site is built by H51, H58, and H95. In terms of domain architecture, Nudix hydrolase spans 56–193 (VRHRAFTCLL…RQLRLCPWFE (138 aa)). E113 serves as a coordination point for Mg(2+). The Mn(2+) site is built by E142 and E144. E144 is an active-site residue.

Belongs to the IPP isomerase type 1 family. It depends on Mg(2+) as a cofactor. The cofactor is Mn(2+).

Its subcellular location is the cytoplasm. The catalysed reaction is isopentenyl diphosphate = dimethylallyl diphosphate. It functions in the pathway isoprenoid biosynthesis; dimethylallyl diphosphate biosynthesis; dimethylallyl diphosphate from isopentenyl diphosphate: step 1/1. Its function is as follows. Catalyzes the 1,3-allylic rearrangement of the homoallylic substrate isopentenyl (IPP) to its highly electrophilic allylic isomer, dimethylallyl diphosphate (DMAPP). In Halobacterium salinarum (strain ATCC 700922 / JCM 11081 / NRC-1) (Halobacterium halobium), this protein is Isopentenyl-diphosphate Delta-isomerase.